The following is a 292-amino-acid chain: Glutamyl-Q tRNA(Asp) synthetase (292 aa).

Residues 11–15 (RFAPS) and glutamate 47 each bind L-glutamate. The 'HIGH' region motif lies at 14–24 (PSPTGPLHFGS). Residues cysteine 103, cysteine 105, tyrosine 116, and cysteine 120 each contribute to the Zn(2+) site. Positions 173 and 191 each coordinate L-glutamate. The short motif at 229 to 233 (KLSKQ) is the 'KMSKS' region element. Lysine 232 serves as a coordination point for ATP.

This sequence belongs to the class-I aminoacyl-tRNA synthetase family. GluQ subfamily. The cofactor is Zn(2+).

Its function is as follows. Catalyzes the tRNA-independent activation of glutamate in presence of ATP and the subsequent transfer of glutamate onto a tRNA(Asp). Glutamate is transferred on the 2-amino-5-(4,5-dihydroxy-2-cyclopenten-1-yl) moiety of the queuosine in the wobble position of the QUC anticodon. The polypeptide is Glutamyl-Q tRNA(Asp) synthetase (Acinetobacter baylyi (strain ATCC 33305 / BD413 / ADP1)).